Reading from the N-terminus, the 606-residue chain is METHIGSVDGAAAAADNGAVGCPASAVGCPMTSARPAPVSAGEASLGRHLARRLVQVGVSDVFAVPGDFNLTLLDHLIAEPGLRLVGCCNELNAGYAADGYARARGVGACAVTFTVGGLSVLNAIAGAYSENLPVICIAGGPNSNDYGTNRILHHTIGLPDFSQELRCFQTVTCHQAVVTNLEDAHEQIDTAIATALRESKPVYLSISCNLPGLPHPTFSRDPVPFFLAPRLSNKMGLEAAVEATVEFLNKAVKPVLVGGPKLRVAKAGKAFVDLVDASGYAYAVMPSAKGLVPETHPHFIGTYWGAVSTAFCAEIVESADAYLFAGPIFNDYSSVGYSFLLKKDKAIIVQPERVIVGNGPAFGCVMMKEFLSELAKRVNKNTTAYENYKRIFVPEGQPLESEPNEPLRVNVLFKHVQKMLNSDSAVIAETGDSWFNCQKLKLPEGCGYEFQMQYGSIGWSVGALLGYAQGAKDKRVIACIGDGSFQVTAQDVSTMIRCAQNSIIFLINNGGYTIEVEIHDGPYNVIKNWNYTGLVDAIHNGEGKCWTSKVKCEEELTEAIGMALGEKKDCLCFIEVIAHKDDTSKELLEWGSRVSAANSRPPNPQ.

Substrate is bound by residues Asp68 and His155. The tract at residues 433-515 is thiamine pyrophosphate binding; the sequence is DSWFNCQKLK…FLINNGGYTI (83 aa). Residues Asp483, Asn510, and Gly512 each coordinate Mg(2+). Glu516 is a substrate binding site.

This sequence belongs to the TPP enzyme family. As to quaternary structure, homotetramer. Requires a metal cation as cofactor. Thiamine diphosphate serves as cofactor.

The enzyme catalyses a 2-oxocarboxylate + H(+) = an aldehyde + CO2. This chain is Pyruvate decarboxylase 2 (PDC2), found in Oryza sativa subsp. indica (Rice).